A 379-amino-acid polypeptide reads, in one-letter code: Cytochrome b (379 aa).

The next 4 membrane-spanning stretches (helical) occupy residues phenylalanine 32 to methionine 52, tryptophan 76 to isoleucine 97, tryptophan 112 to leucine 132, and phenylalanine 177 to leucine 197. 2 residues coordinate heme b: histidine 82 and histidine 96. 2 residues coordinate heme b: histidine 181 and histidine 195. Histidine 200 serves as a coordination point for a ubiquinone. 4 consecutive transmembrane segments (helical) span residues tyrosine 225–serine 245, leucine 287–histidine 307, leucine 319–glycine 339, and phenylalanine 346–proline 366.

This sequence belongs to the cytochrome b family. As to quaternary structure, the cytochrome bc1 complex contains 3 respiratory subunits (MT-CYB, CYC1 and UQCRFS1), 2 core proteins (UQCRC1 and UQCRC2) and probably 6 low-molecular weight proteins. Heme b serves as cofactor.

It localises to the mitochondrion inner membrane. Functionally, component of the ubiquinol-cytochrome c reductase complex (complex III or cytochrome b-c1 complex) that is part of the mitochondrial respiratory chain. The b-c1 complex mediates electron transfer from ubiquinol to cytochrome c. Contributes to the generation of a proton gradient across the mitochondrial membrane that is then used for ATP synthesis. The protein is Cytochrome b (mt-cyb) of Chlorophthalmus agassizi (Shortnose greeneye).